Consider the following 108-residue polypeptide: Transcriptional activator HlyU (108 aa).

Positions 13–107 constitute an HTH arsR-type domain; the sequence is EMEKNSAKAV…LLHRLYCQAN (95 aa). The segment at residues 47-66 is a DNA-binding region (H-T-H motif); sequence VGELSSRLELSQSALSQHLA.

Functionally, up-regulates the expression of the hemolysin gene, hlyA, and may promote expression of other virulence determinants in vivo. It may have both positive and negative regulator activities. The polypeptide is Transcriptional activator HlyU (hlyU) (Vibrio cholerae serotype O1 (strain ATCC 39315 / El Tor Inaba N16961)).